The sequence spans 217 residues: Ribosome maturation factor RimP (217 aa).

The protein belongs to the RimP family.

The protein localises to the cytoplasm. Functionally, required for maturation of 30S ribosomal subunits. The polypeptide is Ribosome maturation factor RimP (Nocardia farcinica (strain IFM 10152)).